The chain runs to 22 residues: C-type natriuretic peptide (22 aa).

Cysteine 6 and cysteine 22 form a disulfide bridge.

This sequence belongs to the natriuretic peptide family.

Its subcellular location is the secreted. In terms of biological role, hormone which plays a role in endochondral ossification through regulation of cartilaginous growth plate chondrocytes proliferation and differentiation. May also be vasoactive and natriuretic. Specifically binds and stimulates the cGMP production of the NPR2 receptor. Binds the clearance receptor NPR3. This chain is C-type natriuretic peptide (NPPC), found in Gallus gallus (Chicken).